Here is a 430-residue protein sequence, read N- to C-terminus: Elongation factor 1-alpha (430 aa).

Residues 7-219 (KPHVNIVFIG…DQIPEPEKPV (213 aa)) enclose the tr-type G domain. The G1 stretch occupies residues 16–23 (GHVDHGKS). A GTP-binding site is contributed by 16-23 (GHVDHGKS). Ser23 provides a ligand contact to Mg(2+). Positions 70–74 (GITID) are G2. The interval 91–94 (DAPG) is G3. GTP-binding positions include 91-95 (DAPGH) and 146-149 (NKMD). Positions 146 to 149 (NKMD) are G4. A G5 region spans residues 183–185 (SAW).

Belongs to the TRAFAC class translation factor GTPase superfamily. Classic translation factor GTPase family. EF-Tu/EF-1A subfamily.

The protein resides in the cytoplasm. It catalyses the reaction GTP + H2O = GDP + phosphate + H(+). In terms of biological role, GTP hydrolase that promotes the GTP-dependent binding of aminoacyl-tRNA to the A-site of ribosomes during protein biosynthesis. The sequence is that of Elongation factor 1-alpha from Pyrococcus woesei.